A 333-amino-acid chain; its full sequence is Late embryogenesis abundant protein 1 (333 aa).

Disordered stretches follow at residues 1–20 (MASR…RRAA) and 116–246 (KDYT…GQGQ). Positions 3–52 (SRQDRREARAEADARRAAEEIARARDERVMQAEVDARSAADEIARARADR) form a coiled coil. Basic and acidic residues-rich tracts occupy residues 116 to 163 (KDYT…KDAV), 172 to 219 (EATK…DATK), and 227 to 241 (DKAR…DATD).

Belongs to the LEA type 4 family.

This Oryza sativa subsp. indica (Rice) protein is Late embryogenesis abundant protein 1 (LEA1).